Reading from the N-terminus, the 775-residue chain is N6-adenosine-methyltransferase non-catalytic subunit MTB (775 aa).

The span at 1–10 shows a compositional bias: basic and acidic residues; sequence MKKKQEESSL. 2 disordered regions span residues 1-424 and 520-569; these read MKKK…GAIP and DRGG…EQND. A compositionally biased stretch (low complexity) spans 40–49; the sequence is FESSSRSGGS. 5 stretches are compositionally biased toward basic and acidic residues: residues 50 to 79, 100 to 117, 125 to 222, 229 to 278, and 333 to 344; these read KSKE…ERTH, DGDH…DSGG, EHGE…LKDN, SSGD…RGEA, and EWAHNQEGRQRS. The segment covering 375–400 has biased composition (polar residues); sequence QRGSTPGRTNFVQTPNRGYQTPQGTR.

This sequence belongs to the MT-A70-like family. In terms of assembly, forms homodimers. Interacts with HAKAI, MTA and VIR. Associates with MTA, FIP37, VIR and HAKAI to form the m6A writer complex which is essential for adenosine methylation at specific mRNA sequences.

The protein localises to the nucleus speckle. Its subcellular location is the nucleus. It localises to the nucleoplasm. Probable non-catalytic subunit of the N6-methyltransferase complex, a multiprotein complex that mediates N6-methyladenosine (m6A) methylation at the 5'-[AG]GAC-3' consensus sites of some mRNAs. Associates with MTA, FIP37, VIR and HAKAI to form the m6A writer complex which is essential for adenosine methylation at specific mRNA sequences. N6-methyladenosine (m6A) plays a role in mRNA stability, processing, translation efficiency and editing. In Arabidopsis thaliana (Mouse-ear cress), this protein is N6-adenosine-methyltransferase non-catalytic subunit MTB.